Reading from the N-terminus, the 642-residue chain is Threonine--tRNA ligase (642 aa).

Residues 1-61 enclose the TGS domain; sequence MIKVTFPDGN…EHDGKLQLLT (61 aa). The catalytic stretch occupies residues 240–539; that stretch reads DHRKIGKDLD…LIEEYKGSFP (300 aa). The Zn(2+) site is built by Cys-334, His-385, and His-516.

It belongs to the class-II aminoacyl-tRNA synthetase family. As to quaternary structure, homodimer. Zn(2+) is required as a cofactor.

Its subcellular location is the cytoplasm. It carries out the reaction tRNA(Thr) + L-threonine + ATP = L-threonyl-tRNA(Thr) + AMP + diphosphate + H(+). Its function is as follows. Catalyzes the attachment of threonine to tRNA(Thr) in a two-step reaction: L-threonine is first activated by ATP to form Thr-AMP and then transferred to the acceptor end of tRNA(Thr). Also edits incorrectly charged L-seryl-tRNA(Thr). The chain is Threonine--tRNA ligase from Acholeplasma laidlawii (strain PG-8A).